The primary structure comprises 458 residues: Morphogenetic regulator of filamentous growth protein 1 (458 aa).

Residues 401-458 (KKDSGSEPLHAKRRRNSGISPRTTTLGPNGNSNTSNEELPTSDVNDINKDMTKKKMKF) form a disordered region. The segment covering 417 to 445 (SGISPRTTTLGPNGNSNTSNEELPTSDVN) has biased composition (polar residues). Basic and acidic residues predominate over residues 446–458 (DINKDMTKKKMKF).

This sequence belongs to the MFG1 family. As to quaternary structure, interacts with FLO8 and MSS11, both morphogenetic transcription factors binding directly to the FLO11 promoter.

It is found in the nucleus. Transcriptional regulator with a general role in all morphogenetically distinct forms of filamentous growth, namely haploid invasive growth, biofilm formation, and diploid pseudohyphal growth. May control FLO11 gene expression as part of a promoter-bound complex with FLO8 and MSS1. The polypeptide is Morphogenetic regulator of filamentous growth protein 1 (MFG1) (Saccharomyces cerevisiae (strain ATCC 204508 / S288c) (Baker's yeast)).